Here is a 182-residue protein sequence, read N- to C-terminus: UPF0301 protein NMB1336 (182 aa).

This sequence belongs to the UPF0301 (AlgH) family.

The polypeptide is UPF0301 protein NMB1336 (Neisseria meningitidis serogroup B (strain ATCC BAA-335 / MC58)).